Reading from the N-terminus, the 364-residue chain is Aminomethyltransferase (364 aa).

This sequence belongs to the GcvT family. The glycine cleavage system is composed of four proteins: P, T, L and H.

It carries out the reaction N(6)-[(R)-S(8)-aminomethyldihydrolipoyl]-L-lysyl-[protein] + (6S)-5,6,7,8-tetrahydrofolate = N(6)-[(R)-dihydrolipoyl]-L-lysyl-[protein] + (6R)-5,10-methylene-5,6,7,8-tetrahydrofolate + NH4(+). Its function is as follows. The glycine cleavage system catalyzes the degradation of glycine. This Staphylococcus carnosus (strain TM300) protein is Aminomethyltransferase.